Consider the following 611-residue polypeptide: POU domain, class 6, transcription factor 1 (611 aa).

Residues alanine 62–alanine 93 are disordered. One can recognise a POU-specific domain in the interval glutamate 449–glutamate 523. A DNA-binding region (homeobox) is located at residues lysine 544–serine 603.

Belongs to the POU transcription factor family. Class-6 subfamily. As to expression, in the embryo, expressed exclusively in the developing brain, whereas in the adult its expression is restricted to brain, heart, skeletal muscle and lung. In the brain, the highest expression levels are found in specific cell layers of the cortex, the olfactory bulb, the hippocampus and the cerebellum.

The protein localises to the nucleus. Transcription factor that binds preferentially to a variant of the octamer motif (5'-ATGATAAT-3'). This chain is POU domain, class 6, transcription factor 1 (POU6F1), found in Homo sapiens (Human).